Reading from the N-terminus, the 348-residue chain is Nuclear receptor subfamily 1 group I member 3 (348 aa).

A DNA-binding region (nuclear receptor) is located at residues 8–83 (LRNCVVCGDQ…AGMRKDMILS (76 aa)). The NR C4-type zinc-finger motif lies at 11 to 31 (CVVCGDQATGYHFNALTCEGC). Threonine 38 carries the phosphothreonine; by PKC modification. An NR C4-type zinc finger spans residues 47–71 (CPFAGSCEVSKTQRRHCPACRLQKC). An NR LBD domain is found at 109 to 348 (EQEELIRTLL…MMPLLQEICS (240 aa)).

Belongs to the nuclear hormone receptor family. NR1 subfamily. In terms of assembly, heterodimer of NR1I3 and RXR. Interacts with PSMC4. Interacts with ECT2. Directly interacts with DNAJC7; this complex may also include HSP90. Interacts with CRY1. Interacts with CRY2 in a ligand-dependent manner. In terms of processing, phosphorylated at Thr-38 by PKC, dephosphorylation of Thr-38 is required for nuclear translocation and activation.

The protein localises to the nucleus. Its subcellular location is the cytoplasm. It is found in the cytoskeleton. Binds and transactivates the retinoic acid response elements that control expression of the retinoic acid receptor beta 2 and alcohol dehydrogenase 3 genes. Transactivates both the phenobarbital responsive element module of the human CYP2B6 gene and the CYP3A4 xenobiotic response element. This is Nuclear receptor subfamily 1 group I member 3 (NR1I3) from Pan troglodytes (Chimpanzee).